The sequence spans 542 residues: MTRYIFVTGGVVSSLGKGIASASLAAILEARGLKVTILKLDPYINVDPGTMSPFQHGEVFVTEDGAETDLDLGHYERFIRTPMTKRNNFTTGRVYEEVIRKERRGDYLGGTVQVIPHITDEIKRRVVEGAAGADVALIEVGGTVGDIESLPFLEACRQLKVEVGSQRALFMHLTLVPYIATAGEIKTKPTQHSVKEMRSIGLQPDILLCRSEHEVDASSRRKIALFTNVEERAVIPMQDARSIYAIPRMLHEYGLDQLVIERFGLDAREADLSEWDAVVDSLMNPQDEVTIAMVGKYMELLDAYKSLIESLLHAGIKTRTKVNINYIDSEDIERDGTSVLESADAILVPGGFGERGVEGKIRTVQYARENKVPYLGICLGMQVAVIEYARNVAGLKDAHSTEFREHTPEPVVGLITEWLDATGEKEERTEESDLGGTMRLGAQDCVLTEGSTIVGCYGKKTIRERHRHRYEVNNHFLPRLEEAGLQISGRSADGKLVEVVEAPDHPWFVACQFHPEFTSTPRDGHPLFKGFVEAALANKKGS.

Residues 1 to 265 form an amidoligase domain region; it reads MTRYIFVTGG…DQLVIERFGL (265 aa). A CTP-binding site is contributed by Ser13. Ser13 serves as a coordination point for UTP. Residues 14–19 and Asp71 contribute to the ATP site; that span reads SLGKGI. Residues Asp71 and Glu139 each coordinate Mg(2+). CTP-binding positions include 146–148, 186–191, and Lys222; these read DIE and KTKPTQ. Residues 186 to 191 and Lys222 each bind UTP; that span reads KTKPTQ. In terms of domain architecture, Glutamine amidotransferase type-1 spans 290-541; that stretch reads TIAMVGKYME…VEAALANKKG (252 aa). Gly351 lines the L-glutamine pocket. The Nucleophile; for glutamine hydrolysis role is filled by Cys378. Residues 379–382, Glu402, and Arg469 each bind L-glutamine; that span reads LGMQ. Active-site residues include His514 and Glu516.

It belongs to the CTP synthase family. Homotetramer.

It catalyses the reaction UTP + L-glutamine + ATP + H2O = CTP + L-glutamate + ADP + phosphate + 2 H(+). It carries out the reaction L-glutamine + H2O = L-glutamate + NH4(+). The enzyme catalyses UTP + NH4(+) + ATP = CTP + ADP + phosphate + 2 H(+). Its pathway is pyrimidine metabolism; CTP biosynthesis via de novo pathway; CTP from UDP: step 2/2. Its activity is regulated as follows. Allosterically activated by GTP, when glutamine is the substrate; GTP has no effect on the reaction when ammonia is the substrate. The allosteric effector GTP functions by stabilizing the protein conformation that binds the tetrahedral intermediate(s) formed during glutamine hydrolysis. Inhibited by the product CTP, via allosteric rather than competitive inhibition. Catalyzes the ATP-dependent amination of UTP to CTP with either L-glutamine or ammonia as the source of nitrogen. Regulates intracellular CTP levels through interactions with the four ribonucleotide triphosphates. The protein is CTP synthase of Marinobacter nauticus (strain ATCC 700491 / DSM 11845 / VT8) (Marinobacter aquaeolei).